A 479-amino-acid polypeptide reads, in one-letter code: UDP-glycosyltransferase 71B6 (479 aa).

UDP-alpha-D-glucose is bound by residues Ser-275, 342-344, 359-367, and 381-384; these read AEQ, HGGWNSTLE, and YAEQ.

Belongs to the UDP-glycosyltransferase family.

In terms of biological role, glucosyltransferase that glucosylates the (+) enantiomer of abscisic acid ((+)-ABA). Is not active on structural analogs with alterations to the 8'- and 9'- methyl groups. This Arabidopsis thaliana (Mouse-ear cress) protein is UDP-glycosyltransferase 71B6 (UGT71B6).